We begin with the raw amino-acid sequence, 198 residues long: tRNA (pseudouridine(54)-N(1))-methyltransferase (198 aa).

Residues Leu130, Gly153, 176 to 181, and Cys186 contribute to the S-adenosyl-L-methionine site; that span reads LSPLEL.

This sequence belongs to the methyltransferase superfamily. TrmY family. In terms of assembly, homodimer.

The protein resides in the cytoplasm. It catalyses the reaction pseudouridine(54) in tRNA + S-adenosyl-L-methionine = N(1)-methylpseudouridine(54) in tRNA + S-adenosyl-L-homocysteine + H(+). Its function is as follows. Specifically catalyzes the N1-methylation of pseudouridine at position 54 (Psi54) in tRNAs. The protein is tRNA (pseudouridine(54)-N(1))-methyltransferase of Methanococcus maripaludis (strain C5 / ATCC BAA-1333).